The sequence spans 204 residues: Protein OPG030 (204 aa).

Residues Phe95 to Ile177 enclose the BACK domain.

This sequence belongs to the orthopoxvirus OPG030 family.

This Homo sapiens (Human) protein is Protein OPG030 (OPG30).